The sequence spans 513 residues: Leucine-rich repeat-containing protein 24 (513 aa).

The N-terminal stretch at 1–20 is a signal peptide; the sequence is MALRAPALLPLLLLLLPLRA. In terms of domain architecture, LRRNT spans 21–50; sequence AGCPAACRCYSATVECGALRLRVVPLGIPP. LRR repeat units lie at residues 51–72, 75–96, 99–120, 123–144, 147–168, and 171–192; these read GTQT…ALAP, ALRR…AFRA, RLLE…AFVG, QLRV…TFLH, RLQE…ALAG, and SLAL…ALQP. The 56-residue stretch at 204-259 folds into the LRRCT domain; the sequence is NPWRCDCALHWLGAWIKEGGQRLLTSRDRKIMCAEPPRLALQSLLDVSHSSLICIP. The region spanning 260 to 361 is the Ig-like C2-type domain; it reads PSVHVQPLEL…GAARVPFRLL (102 aa). A disulfide bridge connects residues C281 and C345. Residues N334 and N363 are each glycosylated (N-linked (GlcNAc...) asparagine). Residues 365-391 form a disordered region; it reads SRQQPQQPAQPPPPAARPAGSEPRPEA. A helical membrane pass occupies residues 406 to 426; it reads AIAAAIALLALTALLLVAMIC.

It localises to the membrane. The protein is Leucine-rich repeat-containing protein 24 (LRRC24) of Homo sapiens (Human).